Reading from the N-terminus, the 425-residue chain is UDP-N-acetylglucosamine 1-carboxyvinyltransferase (425 aa).

24–25 (KN) is a binding site for phosphoenolpyruvate. Residue Arg-95 participates in UDP-N-acetyl-alpha-D-glucosamine binding. Residue Cys-119 is the Proton donor of the active site. 2-(S-cysteinyl)pyruvic acid O-phosphothioketal is present on Cys-119. UDP-N-acetyl-alpha-D-glucosamine is bound by residues 124-128 (RPVDQ), Asp-308, and Val-330.

It belongs to the EPSP synthase family. MurA subfamily.

It is found in the cytoplasm. The catalysed reaction is phosphoenolpyruvate + UDP-N-acetyl-alpha-D-glucosamine = UDP-N-acetyl-3-O-(1-carboxyvinyl)-alpha-D-glucosamine + phosphate. The protein operates within cell wall biogenesis; peptidoglycan biosynthesis. In terms of biological role, cell wall formation. Adds enolpyruvyl to UDP-N-acetylglucosamine. The sequence is that of UDP-N-acetylglucosamine 1-carboxyvinyltransferase from Deinococcus deserti (strain DSM 17065 / CIP 109153 / LMG 22923 / VCD115).